The following is a 3646-amino-acid chain: Platelet adherence protein A (3646 aa).

Positions M1–A33 are cleaved as a signal peptide. The segment at D34–Q359 is does not bind platelets. The tract at residues D34 to D690 is F2, binds platelets, fibronectin, vitronectin, salivary pellicle, causes ADP secretion by dense granules. The tract at residues D34 to E1328 is binds platelets. A VWFA domain is found at D75–V373. The Integrin-like recognition motif NGR signature appears at N214 to R216. Residues R416–T418 carry the Integrin-like recognition motif RGT motif. Residues K439 to N466 are disordered. Basic and acidic residues predominate over residues D445–E454. The Integrin-like recognition motif AGD motif lies at A485 to D487. The interval T709–F3205 is central region with RrgB repeats. Basic and acidic residues-rich tracts occupy residues K1124–T1135 and D1563–N1573. Disordered stretches follow at residues K1124–N1153, D1563–K1589, F2011–L2036, E2170–A2198, K2320–E2343, P2467–K2492, A2611–K2644, F2767–L2792, P2916–P2948, T3202–T3252, A3371–E3412, and N3550–G3618. Residues F2011–K2022 show a composition bias toward polar residues. Residues F2767–K2778 show a composition bias toward polar residues. Polar residues predominate over residues G3210–V3220. The segment covering R3223–E3237 has biased composition (basic and acidic residues). 2 coiled-coil regions span residues I3326–K3376 and V3408–K3475. Low complexity predominate over residues A3371–A3406. Residues N3550–N3560 are compositionally biased toward polar residues. Residues P3563–P3605 show a composition bias toward pro residues. The LPXTG sorting signal motif lies at L3614 to G3618. T3617 carries the pentaglycyl murein peptidoglycan amidated threonine modification. Residues G3618–H3646 constitute a propeptide, removed by sortase.

Its subcellular location is the secreted. It is found in the cell wall. Its activity is regulated as follows. Whole bacterial adhesion to Chinese hamster ovary cells expressing GPIIbIIIa is abrogated by integrin inhibitor RGDS and GPIIbIIIa inhibitor Abciximab. Functionally, a cell wall protein involved with Hsa in host cell interactions required for colonization and pathogenesis. Involved in recognition of platelets. Interacts with human platelet integrin receptor GPIIbIIIa (a complex of ITGA2B and ITGB3). Involved in platelet spreading, presumably by activation of outside-in signaling leading to platelet activation and then spreading. Spreading also involves GPIIbIIIa. Binding to platelets under static conditions causes platelet dense granules to secrete ADP (similar to release induced by fibrinogen binding), has no effect on platelet alpha granule release. The N-terminal 656 aa residue fragment (called F2) also binds platelets, causes dense granule secretion and allows platelet spreading. Acts in concert with Hsa to promote binding to human fibronectin (FN1) and vitronectin (VTN), and biofilm formation. F2 bind activated platelets more strongly than unactivated platelets. Binding to both FN1 and VTN is mediated at least in part by their glycosylation. The chain is Platelet adherence protein A from Streptococcus gordonii (strain Challis / ATCC 35105 / BCRC 15272 / CH1 / DL1 / V288).